A 116-amino-acid chain; its full sequence is MNTKKQSRIRRARRARLHIRDLGANRLTVHRTPRHMYAQVISPCGSKVLASASTLEEALRGSATGNKVAAKEVGTLIATRAKAAGVTSVAFDRSGFKYHGRVQVLADAAREAGLEF.

Belongs to the universal ribosomal protein uL18 family. In terms of assembly, part of the 50S ribosomal subunit; part of the 5S rRNA/L5/L18/L25 subcomplex. Contacts the 5S and 23S rRNAs.

In terms of biological role, this is one of the proteins that bind and probably mediate the attachment of the 5S RNA into the large ribosomal subunit, where it forms part of the central protuberance. The polypeptide is Large ribosomal subunit protein uL18 (Marinomonas sp. (strain MWYL1)).